The following is a 461-amino-acid chain: Coagulation factor IX (461 aa).

A signal peptide spans 1–28 (MQRVNMIMAESPGLITICLLGYLLSAEC). A propeptide spanning residues 29–46 (TVFLDHENANKILNRPKR) is cleaved from the precursor. Ca(2+)-binding residues include tyrosine 47, asparagine 48, glutamate 53, glutamate 54, glutamate 61, glutamate 63, glutamate 66, glutamate 67, glutamate 72, glutamate 73, and glutamate 76. The Gla domain occupies 47–92 (YNSGKLEEFVQGNLERECMEEKCSFEEAREVFENTERTTEFWKQYV). 4-carboxyglutamate occurs at positions 53, 54, 61, 63, 66, 67, 72, 73, 76, 79, and 82. Glutamate 61 contributes to the Mg(2+) binding site. A disulfide bond links cysteine 64 and cysteine 69. A Mg(2+)-binding site is contributed by glutamate 66. Glutamate 72 is a Mg(2+) binding site. A Mg(2+)-binding site is contributed by glutamate 76. A Ca(2+)-binding site is contributed by glutamate 82. Glutamate 82 lines the Mg(2+) pocket. O-linked (GalNAc...) threonine glycosylation occurs at threonine 85. Ca(2+) contacts are provided by glutamate 86, aspartate 93, glycine 94, and glutamine 96. Glutamate 86 bears the 4-carboxyglutamate mark. Glutamate 86 serves as a coordination point for Mg(2+). One can recognise an EGF-like 1; calcium-binding domain in the interval 93-129 (DGDQCESNPCLNGGSCKDDINSYECWCPFGFEGKNCE). 10 disulfide bridges follow: cysteine 97–cysteine 108, cysteine 102–cysteine 117, cysteine 119–cysteine 128, cysteine 134–cysteine 145, cysteine 141–cysteine 155, cysteine 157–cysteine 170, cysteine 178–cysteine 335, cysteine 252–cysteine 268, cysteine 382–cysteine 396, and cysteine 407–cysteine 435. Residue serine 99 is glycosylated (O-linked (Glc...) serine). The O-linked (Fuc...) serine glycan is linked to serine 107. Residues aspartate 110 and aspartate 111 each coordinate Ca(2+). The residue at position 110 (aspartate 110) is a (3R)-3-hydroxyaspartate. Residue serine 114 is modified to Phosphoserine. An EGF-like 2 domain is found at 130–171 (LDVTCNIKNGRCEQFCKNSADNKVVCSCTEGYRLAENQKSCE). Residues 192–226 (AETVFPDVDYVNSTEAETILDNITQSTQSFNDFTR) constitute a propeptide, activation peptide. Tyrosine 201 carries the sulfotyrosine modification. The residue at position 204 (serine 204) is a Phosphoserine. Threonine 205 is subject to Phosphothreonine; alternate. Threonine 205 carries an O-linked (GalNAc...) threonine; alternate glycan. An N-linked (GlcNAc...) asparagine glycan is attached at asparagine 213. Residues threonine 215 and threonine 225 are each glycosylated (O-linked (GalNAc...) threonine). The region spanning 227-459 (VVGGEDAKPG…YVNWIKEKTK (233 aa)) is the Peptidase S1 domain. The Charge relay system role is filled by histidine 267. Ca(2+) contacts are provided by glutamate 281, asparagine 283, glutamate 286, glutamate 288, and glutamate 291. The Charge relay system role is filled by aspartate 315. Serine 411 (charge relay system) is an active-site residue.

This sequence belongs to the peptidase S1 family. In terms of assembly, heterodimer of a light chain and a heavy chain; disulfide-linked. Interacts (inactive and activated) with F11 (activated) in calcium-dependent manner. Interacts with SERPINC1. Activated by factor XIa, which excises the activation peptide. The propeptide can also be removed by snake venom protease. In terms of processing, the iron and 2-oxoglutarate dependent 3-hydroxylation of aspartate and asparagine is (R) stereospecific within EGF domains. Activated by coagulation factor VIIa-tissue factor (F7-F3) complex in calcium-dependent manner. Post-translationally, predominantly O-glucosylated at Ser-99 by POGLUT1 in vitro.

Its subcellular location is the secreted. It carries out the reaction Selective cleavage of Arg-|-Ile bond in factor X to form factor Xa.. In terms of biological role, factor IX is a vitamin K-dependent plasma protein that participates in the intrinsic pathway of blood coagulation by converting factor X to its active form in the presence of Ca(2+) ions, phospholipids, and factor VIIIa. The polypeptide is Coagulation factor IX (F9) (Pan troglodytes (Chimpanzee)).